The primary structure comprises 206 residues: Ras-related protein RABH1a (206 aa).

GTP is bound at residue 14 to 21 (GDQGVGKT). The Effector region motif lies at 36–44 (YQATIGIDF). GTP is bound by residues 62-66 (DTAGQ), 120-123 (NKTD), and 150-151 (SA). Residues Cys-204 and Cys-206 are each lipidated (S-geranylgeranyl cysteine). At Cys-206 the chain carries Cysteine methyl ester.

This sequence belongs to the small GTPase superfamily. Rab family.

The protein localises to the golgi apparatus membrane. Its function is as follows. Protein transport. Regulator of membrane traffic from the Golgi apparatus towards the endoplasmic reticulum (ER). This Arabidopsis thaliana (Mouse-ear cress) protein is Ras-related protein RABH1a (RABH1A).